Here is a 540-residue protein sequence, read N- to C-terminus: MSRELTVSLAAIASQALTFPQLNQIHAQLIVFNSLPRQSYWASRIISCCTRLRAPSYYTRLIFDSVTFPNVFVVNSMFKYFSKMDMANDVLRLYEQRSRCGIMPDAFSFPVVIKSAGRFGILFQALVEKLGFFKDPYVRNVIMDMYVKHESVESARKVFDQISQRKGSDWNVMISGYWKWGNKEEACKLFDMMPENDVVSWTVMITGFAKVKDLENARKYFDRMPEKSVVSWNAMLSGYAQNGFTEDALRLFNDMLRLGVRPNETTWVIVISACSFRADPSLTRSLVKLIDEKRVRLNCFVKTALLDMHAKCRDIQSARRIFNELGTQRNLVTWNAMISGYTRIGDMSSARQLFDTMPKRNVVSWNSLIAGYAHNGQAALAIEFFEDMIDYGDSKPDEVTMISVLSACGHMADLELGDCIVDYIRKNQIKLNDSGYRSLIFMYARGGNLWEAKRVFDEMKERDVVSYNTLFTAFAANGDGVETLNLLSKMKDEGIEPDRVTYTSVLTACNRAGLLKEGQRIFKSIRNPLADHYACMDLLR.

PPR repeat units follow at residues 70–104 (NVFV…GIMP), 105–134 (DAFS…GFFK), 135–165 (DPYV…ISQR), 166–196 (KGSD…MPEN), 197–227 (DVVS…MPEK), 228–262 (SVVS…GVRP), 263–297 (NETT…RVRL), 298–328 (NCFV…LGTQ), 330–364 (NLVT…NVVS), 365–395 (WNSL…GDSK), 397–431 (DEVT…QIKL), 432–462 (NDSG…MKER), 463–497 (DVVS…GIEP), and 498–528 (DRVT…IRNP).

Belongs to the PPR family. PCMP-A subfamily.

This chain is Pentatricopeptide repeat-containing protein At1g14470 (PCMP-A4), found in Arabidopsis thaliana (Mouse-ear cress).